Reading from the N-terminus, the 301-residue chain is Asialoglycoprotein receptor 2 (301 aa).

A disordered region spans residues 1–29; it reads MEKDFQDIQQLDSEENDHQLIGDEEQGSH. At 1 to 58 the chain is on the cytoplasmic side; that stretch reads MEKDFQDIQQLDSEENDHQLIGDEEQGSHVQNLRTENPRWGGQPPSRPFPQRLCSKFR. Serine 13 carries the post-translational modification Phosphoserine. Cysteine 54 carries the S-palmitoyl cysteine lipid modification. The chain crosses the membrane as a helical; Signal-anchor for type II membrane protein span at residues 59–79; that stretch reads LSLLALAFNILLLVVICVVSS. The Extracellular portion of the chain corresponds to 80 to 301; it reads QSMQLQKEFW…ACERKRDITY (222 aa). N-linked (GlcNAc...) asparagine glycans are attached at residues asparagine 97, asparagine 119, and asparagine 165. The 127-residue stretch at 169-295 folds into the C-type lectin domain; that stretch reads CCPVNWVEFG…QQVNRWACER (127 aa). Disulfide bonds link cysteine 170/cysteine 181, cysteine 198/cysteine 293, and cysteine 271/cysteine 285.

As to quaternary structure, interacts with LASS2. As to expression, expressed exclusively in hepatic parenchymal cells.

It localises to the membrane. In terms of biological role, mediates the endocytosis of plasma glycoproteins to which the terminal sialic acid residue on their complex carbohydrate moieties has been removed. The receptor recognizes terminal galactose and N-acetylgalactosamine units. After ligand binding to the receptor, the resulting complex is internalized and transported to a sorting organelle, where receptor and ligand are disassociated. The receptor then returns to the cell membrane surface. In Rattus norvegicus (Rat), this protein is Asialoglycoprotein receptor 2 (Asgr2).